A 445-amino-acid chain; its full sequence is Phosphoglucosamine mutase (445 aa).

Ser-102 acts as the Phosphoserine intermediate in catalysis. The Mg(2+) site is built by Ser-102, Asp-241, Asp-243, and Asp-245. Ser-102 is subject to Phosphoserine.

The protein belongs to the phosphohexose mutase family. It depends on Mg(2+) as a cofactor. Post-translationally, activated by phosphorylation.

The catalysed reaction is alpha-D-glucosamine 1-phosphate = D-glucosamine 6-phosphate. Functionally, catalyzes the conversion of glucosamine-6-phosphate to glucosamine-1-phosphate. The protein is Phosphoglucosamine mutase of Acinetobacter baumannii (strain AB0057).